A 140-amino-acid chain; its full sequence is PDZ domain-containing protein 11 (140 aa).

Residues 47–129 (IVTLKKPPGA…ISMRVRFFPY (83 aa)) form the PDZ domain.

As to quaternary structure, interacts with ATP2B1, ATP2B2, ATP2B3, ATP2B4 and ATP7A. Interacts with PLEKHA7 (via WW domains) at zonula adherens; this interaction is essential for the interaction between PLEKHA7 and the ADAM10-binding protein TSPAN33. Interacts with SLC5A6.

The protein localises to the cytoplasm. It localises to the cell junction. The protein resides in the adherens junction. It is found in the cell membrane. Functionally, mediates docking of ADAM10 to zonula adherens by interacting with PLEKHA7 which is required for PLEKHA7 to interact with the ADAM10-binding protein TSPAN33. The polypeptide is PDZ domain-containing protein 11 (Pdzd11) (Mus musculus (Mouse)).